We begin with the raw amino-acid sequence, 794 residues long: DNA mismatch repair protein pms1 (794 aa).

Disordered stretches follow at residues Ser351–Tyr384 and Gly409–Ser442. A compositionally biased stretch (polar residues) spans Gln352–Ala371. Residues Leu419–Arg429 are compositionally biased toward basic and acidic residues. Residues Arg430–Ser442 show a composition bias toward polar residues.

It belongs to the DNA mismatch repair MutL/HexB family.

This protein is involved in the repair of mismatches in DNA. In Schizosaccharomyces pombe (strain 972 / ATCC 24843) (Fission yeast), this protein is DNA mismatch repair protein pms1 (pms1).